Reading from the N-terminus, the 456-residue chain is MFVLNRSSGLIHRSVPLLAQVSTPTTSTTKLAQLHTTHALSKEDYYKTLGVDKKSDAKAIKKAYFQLAKKYHPDVNKTKEAQTKFQEISEAYEVLSDDTKRQEYDAYGSGGGPAGGRGGAGGFHHHGNVDVNEIFRRAFGGGGGMGGFNFDNFAQSAFGHSAAQEMVMDISFEEAVRGATKNVSVNVVEDCLKCHGTQVEPGHKKTSCPYCNGTGAVSQRLQGGFFYQTTCNRCRGSGHYNKNPCQECEGEGQTVQRRQVSFNVPAGTNNGDSLKFQVGKNQLFVRFNVAPSLKFRREKDDIHCDVDISLAQAVLGGTVKVPGINGDTYVHIPAGTGSHTKMRLTGKGVKRLHSYGNGDQYMHIKVTVPKYLTAEQKQIMLAWAATEQLKDGTIKGLEKNQKTEEKETKKNEEKKSEGASESQKRRSEPVAENAETIDENQENEGFFEKIKRKIFG.

The J domain maps to 44 to 108 (DYYKTLGVDK…TKRQEYDAYG (65 aa)). The CR-type zinc-finger motif lies at 178 to 257 (GATKNVSVNV…CEGEGQTVQR (80 aa)). CXXCXGXG motif repeat units follow at residues 208–215 (CPYCNGTG), 231–238 (CNRCRGSG), and 245–252 (CQECEGEG). Over residues 395 to 429 (KGLEKNQKTEEKETKKNEEKKSEGASESQKRRSEP) the composition is skewed to basic and acidic residues. The interval 395–443 (KGLEKNQKTEEKETKKNEEKKSEGASESQKRRSEPVAENAETIDENQEN) is disordered.

In Caenorhabditis elegans, this protein is DnaJ homolog dnj-10 (dnj-10).